Consider the following 167-residue polypeptide: NADH-quinone oxidoreductase subunit B (167 aa).

Residues Cys-40, Cys-41, Cys-105, and Cys-134 each coordinate [4Fe-4S] cluster.

It belongs to the complex I 20 kDa subunit family. As to quaternary structure, NDH-1 is composed of 14 different subunits. Subunits NuoB, C, D, E, F, and G constitute the peripheral sector of the complex. It depends on [4Fe-4S] cluster as a cofactor.

It localises to the cell inner membrane. It carries out the reaction a quinone + NADH + 5 H(+)(in) = a quinol + NAD(+) + 4 H(+)(out). In terms of biological role, NDH-1 shuttles electrons from NADH, via FMN and iron-sulfur (Fe-S) centers, to quinones in the respiratory chain. The immediate electron acceptor for the enzyme in this species is believed to be ubiquinone. Couples the redox reaction to proton translocation (for every two electrons transferred, four hydrogen ions are translocated across the cytoplasmic membrane), and thus conserves the redox energy in a proton gradient. The polypeptide is NADH-quinone oxidoreductase subunit B (Campylobacter jejuni subsp. jejuni serotype O:6 (strain 81116 / NCTC 11828)).